A 1534-amino-acid chain; its full sequence is DNA polymerase alpha catalytic subunit (1534 aa).

Residues 1–12 (MDEGSADAGASG) show a composition bias toward low complexity. 3 disordered regions span residues 1-23 (MDEG…SEAV), 96-141 (THRT…LSAA), and 864-905 (FNST…GPSY). Positions 116–125 (RKRKQPRPQS) are enriched in basic residues. Residues 127–141 (RPPQQSAAAASLSAA) show a composition bias toward low complexity. Basic and acidic residues-rich tracts occupy residues 864 to 882 (FNST…RPDE) and 889 to 898 (DEGHHVDQGK). Residues C1340, C1343, C1383, C1386, C1422, C1427, C1448, and C1454 each coordinate Zn(2+). A CysA-type zinc finger spans residues 1340–1386 (CPSCSTTFDCPPVSSLIIGSSSGNVSNPNEGNDASINFWRRMRCPRC). The CysB motif motif lies at 1422–1451 (CDDEGCKYSTHSVNLRVMGDSERGTICPNY).

This sequence belongs to the DNA polymerase type-B family.

It is found in the nucleus. It carries out the reaction DNA(n) + a 2'-deoxyribonucleoside 5'-triphosphate = DNA(n+1) + diphosphate. Polymerase alpha in a complex with DNA primase is a replicative polymerase. In Oryza sativa subsp. japonica (Rice), this protein is DNA polymerase alpha catalytic subunit.